The primary structure comprises 344 residues: Meiotic expression up-regulated protein 26 (344 aa).

The protein localises to the nucleus. This is Meiotic expression up-regulated protein 26 (meu26) from Schizosaccharomyces pombe (strain 972 / ATCC 24843) (Fission yeast).